Reading from the N-terminus, the 229-residue chain is MDENSVTFKGTVNGLTIILKNEPEFSEIIQCMRDKVNSAGKFFRGAKLAVKYKGRILNEEERSQLLEILVRESGARIEAFEEDKEQVQNVANNVSSDKPVERKNQIKKYMFFKGIEEGQTKFYRGTVRSGQLVNFDGNLVILGDVNPGAVIEATGNIVVMGLLRGVVHAGSDGNKEAIVVALGLNPTQLRIADIITRPPDEKGVVGNPIPELAYVKDDILYVERFLPTR.

Belongs to the MinC family. Interacts with MinD and FtsZ.

In terms of biological role, cell division inhibitor that blocks the formation of polar Z ring septums. Rapidly oscillates between the poles of the cell to destabilize FtsZ filaments that have formed before they mature into polar Z rings. Prevents FtsZ polymerization. This Ruminiclostridium cellulolyticum (strain ATCC 35319 / DSM 5812 / JCM 6584 / H10) (Clostridium cellulolyticum) protein is Probable septum site-determining protein MinC.